The primary structure comprises 78 residues: Large ribosomal subunit protein uL30 (78 aa).

Positions 58–68 (DDTSPDAETGA) are enriched in acidic residues. Positions 58–78 (DDTSPDAETGADLERDGGNRS) are disordered. Residues 69-78 (DLERDGGNRS) are compositionally biased toward basic and acidic residues.

The protein belongs to the universal ribosomal protein uL30 family. In terms of assembly, part of the 50S ribosomal subunit.

In Roseiflexus sp. (strain RS-1), this protein is Large ribosomal subunit protein uL30.